Here is a 1771-residue protein sequence, read N- to C-terminus: Myosin-H heavy chain (1771 aa).

Residues 7–57 (CGKEKVWVPNPEKGWINGDLIKEIPGEGWLVRDENGKEIKIEKDELRMQNP) enclose the Myosin N-terminal SH3-like domain. In terms of domain architecture, Myosin motor spans 61-840 (EGIDDMTSLS…IIANLELLRS (780 aa)). Position 154 to 161 (154 to 161 (GESGAGKT)) interacts with ATP. The interval 690 to 712 (LNSLMTTINSTNPHYIRCIKPNT) is actin-binding. IQ domains follow at residues 843-872 (MINS…SSIY), 866-895 (TKHS…ENSA), and 940-969 (RIKK…EAKS). 3 disordered regions span residues 1070 to 1176 (EKQH…NNVD), 1218 to 1282 (VKKS…PINM), and 1312 to 1343 (LNNG…KHIQ). The span at 1077–1111 (YKNNEVVGNTSFEGSTTTNNGVTSPPKSSPASPIR) shows a compositional bias: polar residues. The span at 1112 to 1139 (NSINSNSDTTISGSSDDSIDNTDSLILS) shows a compositional bias: low complexity. The span at 1143 to 1153 (HKGEDRKRNHE) shows a compositional bias: basic and acidic residues. Positions 1180–1224 (RRQFNELEKEYKELKQMDETHKQYIESLKLQITQLEEKVKKSSSH) form a coiled coil. Over residues 1253-1281 (NSSSHHQQQQQQHNISPSNSITSTTSPIN) the composition is skewed to low complexity. Residues 1427–1695 (TGVLDPIETN…LTSLMDSPKY (269 aa)) form the Dilute domain.

It belongs to the TRAFAC class myosin-kinesin ATPase superfamily. Myosin family. As to quaternary structure, myosin I heavy chain is single-headed. Dimer of a heavy and a light chain. Inability to self-assemble into filaments.

In terms of biological role, myosin is a protein that binds to actin and has ATPase activity that is activated by actin. The polypeptide is Myosin-H heavy chain (myoH) (Dictyostelium discoideum (Social amoeba)).